Reading from the N-terminus, the 292-residue chain is Protein rogdi homolog (292 aa).

Polar residues predominate over residues 1 to 12 (MEVQSLTITTNY). A disordered region spans residues 1-25 (MEVQSLTITTNYPPKPASPNPQDIR).

The protein belongs to the rogdi family.

Its subcellular location is the nucleus envelope. This is Protein rogdi homolog from Caenorhabditis elegans.